The chain runs to 333 residues: Mitochondrial thiamine pyrophosphate carrier 1 (333 aa).

Solcar repeat units lie at residues 12 to 115 (GSRL…ITQF), 129 to 215 (PPSV…LRPR), and 222 to 318 (PYSS…ALKL). The next 6 membrane-spanning stretches (helical) occupy residues 17 to 35 (VTAA…IAPL), 96 to 112 (LLYV…YRSI), 135 to 155 (FIAG…LDLL), 190 to 209 (GLGP…FCVY), 221 to 238 (LPYS…SVMA), and 293 to 310 (GLTV…VTMW).

It belongs to the mitochondrial carrier (TC 2.A.29) family.

The protein localises to the mitochondrion inner membrane. Functionally, mitochondrial transporter that mediates uptake of thiamine pyrophosphate (ThPP) into mitochondria. This is Mitochondrial thiamine pyrophosphate carrier 1 (tpc-1) from Neurospora crassa (strain ATCC 24698 / 74-OR23-1A / CBS 708.71 / DSM 1257 / FGSC 987).